The primary structure comprises 389 residues: S-adenosylmethionine synthase (389 aa).

An ATP-binding site is contributed by His17. Asp19 is a binding site for Mg(2+). Glu45 is a binding site for K(+). L-methionine is bound by residues Glu58 and Gln101. The tract at residues 101–111 (QSPDISQGVDG) is flexible loop. ATP contacts are provided by residues 170 to 172 (DSK), 237 to 238 (RF), Asp246, 252 to 253 (RK), Ala269, and Lys273. Asp246 provides a ligand contact to L-methionine. Position 277 (Lys277) interacts with L-methionine.

This sequence belongs to the AdoMet synthase family. Homotetramer; dimer of dimers. The cofactor is Mg(2+). K(+) serves as cofactor.

The protein localises to the cytoplasm. The enzyme catalyses L-methionine + ATP + H2O = S-adenosyl-L-methionine + phosphate + diphosphate. It participates in amino-acid biosynthesis; S-adenosyl-L-methionine biosynthesis; S-adenosyl-L-methionine from L-methionine: step 1/1. Catalyzes the formation of S-adenosylmethionine (AdoMet) from methionine and ATP. The overall synthetic reaction is composed of two sequential steps, AdoMet formation and the subsequent tripolyphosphate hydrolysis which occurs prior to release of AdoMet from the enzyme. The sequence is that of S-adenosylmethionine synthase from Treponema denticola (strain ATCC 35405 / DSM 14222 / CIP 103919 / JCM 8153 / KCTC 15104).